An 82-amino-acid chain; its full sequence is Delta-conotoxin SVIE (82 aa).

The N-terminal stretch at 1-22 is a signal peptide; it reads MKLTCVMIVAVLFLTTWTFVTA. Residues 23–51 constitute a propeptide that is removed on maturation; the sequence is DDSRYGLKNLFPKARHEMKNPEASKLNKR. 3 disulfide bridges follow: Cys-54–Cys-69, Cys-61–Cys-73, and Cys-68–Cys-77. A 4-hydroxyproline modification is found at Pro-65.

The protein belongs to the conotoxin O1 superfamily. Expressed by the venom duct.

The protein resides in the secreted. Functionally, delta-conotoxins bind to site 6 of voltage-gated sodium channels (Nav) and inhibit the inactivation process. Impairs rapid channel inactivation of Nav1.4/SCN4A (Kd=500 nM). Interacts with a conserved hydrophobic triad (YFV) in the domain-4 voltage sensor of sodium channels. In vivo, injection of both native or synthetic peptide induces twitching of back limbs, running in circles, and spastic paralysis. The polypeptide is Delta-conotoxin SVIE (SO6) (Conus striatus (Striated cone)).